A 370-amino-acid chain; its full sequence is Prolactin-releasing peptide receptor (370 aa).

A disordered region spans residues 1–34 (MTSLPPGTTGDPDLFSGPSPAGSTPANQSAEASE). Over 1-62 (MTSLPPGTTG…LQLVHQLKGL (62 aa)) the chain is Extracellular. Residues 21–34 (AGSTPANQSAEASE) are compositionally biased toward polar residues. N-linked (GlcNAc...) asparagine glycans are attached at residues Asn-27 and Asn-36. Residues 63-83 (IVMLYSIVVVVGLVGNCLLVL) form a helical membrane-spanning segment. Over 84 to 101 (VIARVRRLHNVTNFLIGN) the chain is Cytoplasmic. Residues 102-122 (LALSDVLMCAACVPLTLAYAF) traverse the membrane as a helical segment. Residues 123 to 126 (EPRG) are Extracellular-facing. The chain crosses the membrane as a helical span at residues 127–147 (WVFGGGLCHLVFFLQPVTVYV). A disulfide bond links Cys-134 and Cys-211. Residues 148–175 (SVFTLTTIAVDRYVVLVHPLRRRISLKL) are Cytoplasmic-facing. The chain crosses the membrane as a helical span at residues 176-196 (SAYAVLGIWALSAVLALPAAV). Over 197-223 (HTYHVELKPHDVRLCEEFWGSQERQRQ) the chain is Extracellular. Residues 224-244 (IYAWGLLLGTYLLPLLAILLS) traverse the membrane as a helical segment. The Cytoplasmic portion of the chain corresponds to 245–276 (YVRVSVKLRNRVVPGSVTQSQADWDRARRRRT). Residues 277–297 (FCLLVVVVVVFALCWLPLHIF) traverse the membrane as a helical segment. At 298 to 317 (NLLRDLDPRAIDPYAFGLVQ) the chain is on the extracellular side. Residues 318-338 (LLCHWLAMSSACYNPFIYAWL) form a helical membrane-spanning segment. Residues 339 to 370 (HDSFREELRKMLLSWPRKIVPHGQNMTVSVVI) lie on the Cytoplasmic side of the membrane. A required for interaction with GRIP1, GRIP2 and PICK1 region spans residues 365–370 (TVSVVI).

Belongs to the G-protein coupled receptor 1 family. Interacts through its C-terminal region with the PDZ domain-containing proteins GRIP1, GRIP2 and PICK1. Interacts with PDZ domains 4 and 5 of GRIP1 and with the PDZ domain of PICK1. Widely expressed, with highest levels in pituitary, cerebellum, and hypothalamus.

Its subcellular location is the cell membrane. In terms of biological role, receptor for prolactin-releasing peptide (PrRP). Implicated in lactation, regulation of food intake and pain-signal processing. This is Prolactin-releasing peptide receptor (Prlhr) from Rattus norvegicus (Rat).